We begin with the raw amino-acid sequence, 212 residues long: Calaxin (212 aa).

3 EF-hand domains span residues 65 to 100 (TDDM…FLRG), 101 to 136 (TLEE…SLLK), and 146 to 181 (GIKD…ETLL). The Ca(2+) site is built by D78, D80, D82, C84, E89, D114, N116, D118, E125, D159, D161, D163, K165, and D170.

Component of the outer dynein arm-docking complex along with ODAD1, ODAD2, ODAD3 and ODAD4. As to expression, expressed in trachea multiciliated cells.

The protein localises to the cytoplasm. It is found in the cytoskeleton. It localises to the cilium axoneme. Its subcellular location is the cell projection. The protein resides in the cilium. The protein localises to the flagellum. Component of the outer dynein arm-docking complex (ODA-DC) that mediates outer dynein arms (ODA) binding onto the doublet microtubule. Seems to regulate the assembly of both ODAs and their axonemal docking complex onto ciliary microtubules. Regulates ciliary and flagellar motility and is required for cilia-driven determination of body laterality. In Bos taurus (Bovine), this protein is Calaxin (CLXN).